Consider the following 617-residue polypeptide: MIYDSIVIGAGHAGVEAALILAKKHNTLLITGSLKQVASLPCNPSIGGPAKGVVVREIDALGGVMAKAADLAQIQIKMLNSSKGPAVRALRAQIDKLEYPQIIFEILQKTLNLTLLEGLVNNLVIQNNQVQGVCLIDGTKINAKTVIITTGTYLASQILIGDTKKSSGPNGVPTTYGISTQLKELGFEVIRLKTGTPPRVKKNSIDYSQTKIQMGDNLEQIFSFVPQTNQRPQEPCFLTHTNQTTHQVIQKHLNQSAMYGGYVEGTGPRYCPSIEDKVVRFCDKNSHQIFIEPESLSLDEMYLQGLSTSMPQHVQHEILKTIPGLQNAQITKYAYAIEYDAFNPNQLKHSLETKKIQNLFLAGQMNGTSGYEEAACQGLMAGINASLKLQNKPPFVLKRNEAYIGVLIDDLITKGAKEPYRLLTSRAEFRLLLRHDNADLRLKDYGYQLGLIDEKDYNNFQNKKAKINLLLEKSKNYEILVNSDNLSYLKQQKSASLGEKTTLAQLLKRPELNFCTLQHFLQEKADKTIYEQVEIQIKYEGYIAKAQKEAQKLARLEQKKIPSKINYADIKNLSKEAQEKLDLIKPQTLGQATRILGVNQVDISILLVYLEKHHALL.

FAD contacts are provided by residues 9 to 14 (GAGHAG), Val-120, and Thr-175. Position 267–281 (267–281 (GPRYCPSIEDKVVRF)) interacts with NAD(+). FAD is bound at residue Gln-364.

It belongs to the MnmG family. In terms of assembly, homodimer. Heterotetramer of two MnmE and two MnmG subunits. FAD is required as a cofactor.

The protein resides in the cytoplasm. In terms of biological role, NAD-binding protein involved in the addition of a carboxymethylaminomethyl (cmnm) group at the wobble position (U34) of certain tRNAs, forming tRNA-cmnm(5)s(2)U34. The protein is tRNA uridine 5-carboxymethylaminomethyl modification enzyme MnmG of Onion yellows phytoplasma (strain OY-M).